Here is a 223-residue protein sequence, read N- to C-terminus: Large ribosomal subunit protein uL3 (223 aa).

This sequence belongs to the universal ribosomal protein uL3 family. In terms of assembly, part of the 50S ribosomal subunit. Forms a cluster with proteins L14 and L19.

In terms of biological role, one of the primary rRNA binding proteins, it binds directly near the 3'-end of the 23S rRNA, where it nucleates assembly of the 50S subunit. The sequence is that of Large ribosomal subunit protein uL3 from Mycoplasma capricolum subsp. capricolum (strain California kid / ATCC 27343 / NCTC 10154).